The sequence spans 262 residues: Chondroitin proteoglycan 3 (262 aa).

The first 17 residues, 1–17 (MRSSFIFALLLIGAALA), serve as a signal peptide directing secretion. The interval 37–68 (FSGEASGEASGEASGEFSGEGSGEGSGELSPE) is disordered. Over residues 39–53 (GEASGEASGEASGEF) the composition is skewed to low complexity. 3 N-linked (GlcNAc...) asparagine glycosylation sites follow: Asn140, Asn148, and Asn224.

This is Chondroitin proteoglycan 3 (cpg-3) from Caenorhabditis briggsae.